Here is a 603-residue protein sequence, read N- to C-terminus: Penicillin-binding protein activator LpoA (603 aa).

An N-terminal signal peptide occupies residues 1–26 (MANMTPRKNSVTRLIAPVALALTLAA). C27 carries the N-palmitoyl cysteine lipid modification. C27 carries S-diacylglycerol cysteine lipidation.

This sequence belongs to the LpoA family. As to quaternary structure, interacts with PBP1a.

The protein localises to the cell outer membrane. Functionally, regulator of peptidoglycan synthesis that is essential for the function of penicillin-binding protein 1A (PBP1a). The chain is Penicillin-binding protein activator LpoA from Aliivibrio fischeri (strain ATCC 700601 / ES114) (Vibrio fischeri).